Consider the following 236-residue polypeptide: E3 ubiquitin-protein ligase ATL41 (236 aa).

Residues 31 to 51 (IMLAAVASLSGVILIVFALHL) traverse the membrane as a helical segment. The RING-type; atypical zinc finger occupies 108 to 150 (CAVCLSVLKEQDKARELPNCKHIFHVDCVDTWLTTCSTCPVCR).

Belongs to the RING-type zinc finger family. ATL subfamily.

The protein resides in the membrane. The catalysed reaction is S-ubiquitinyl-[E2 ubiquitin-conjugating enzyme]-L-cysteine + [acceptor protein]-L-lysine = [E2 ubiquitin-conjugating enzyme]-L-cysteine + N(6)-ubiquitinyl-[acceptor protein]-L-lysine.. Its pathway is protein modification; protein ubiquitination. Its function is as follows. E3 ubiquitin-protein ligase able to catalyze polyubiquitination with ubiquitin-conjugating enzyme E2 UBC8, UBC10, UBC11, UBC28, UBC29, UBC30, UBC35 and UBC36 in vitro. The polypeptide is E3 ubiquitin-protein ligase ATL41 (ATL41) (Arabidopsis thaliana (Mouse-ear cress)).